The primary structure comprises 223 residues: Adenylate kinase 4, mitochondrial (223 aa).

An a ribonucleoside 5'-triphosphate-binding site is contributed by 15 to 20 (GSGKGT). Residues 35–64 (SSGHLLRENLKTNTEVGDVAKQYLEKGLLV) form an NMP region. AMP contacts are provided by serine 36 and arginine 41. Lysine 60 carries the N6-succinyllysine modification. Residues 62-64 (LLV), 89-92 (GFPR), and glutamine 96 contribute to the AMP site. The interval 125–162 (RRWIHPSSGRVYNLDFNPPQVLGVDDITGEPLVQQEDD) is LID. Residues arginine 126 and 135-136 (VY) contribute to the a ribonucleoside 5'-triphosphate site. AMP is bound at residue arginine 170. Residue lysine 175 is modified to N6-acetyllysine. Lysine 179 and lysine 186 each carry N6-acetyllysine; alternate. N6-succinyllysine; alternate is present on residues lysine 179 and lysine 186. A ribonucleoside 5'-triphosphate is bound at residue threonine 199.

This sequence belongs to the adenylate kinase family. AK3 subfamily. In terms of assembly, monomer. Interacts with SLC25A5/ANT2. In terms of tissue distribution, expressed in the pyramidal cells in the hippocampus.

The protein localises to the mitochondrion matrix. The catalysed reaction is a ribonucleoside 5'-phosphate + ATP = a ribonucleoside 5'-diphosphate + ADP. The enzyme catalyses AMP + ATP = 2 ADP. It carries out the reaction GTP + AMP = GDP + ADP. It catalyses the reaction CMP + ATP = CDP + ADP. The catalysed reaction is GTP + CMP = CDP + GDP. The enzyme catalyses dAMP + ATP = dADP + ADP. It carries out the reaction dCMP + ATP = dCDP + ADP. It catalyses the reaction a 2'-deoxyribonucleoside 5'-diphosphate + ATP = a 2'-deoxyribonucleoside 5'-triphosphate + ADP. The catalysed reaction is a ribonucleoside 5'-diphosphate + ATP = a ribonucleoside 5'-triphosphate + ADP. The enzyme catalyses GDP + ATP = GTP + ADP. It carries out the reaction CDP + GTP = CTP + GDP. It catalyses the reaction CDP + ATP = CTP + ADP. The catalysed reaction is UDP + ATP = UTP + ADP. The enzyme catalyses GTP + UDP = UTP + GDP. It carries out the reaction dADP + GTP = dATP + GDP. It catalyses the reaction dCDP + GTP = dCTP + GDP. The catalysed reaction is dCDP + ATP = dCTP + ADP. The enzyme catalyses dGDP + ATP = dGTP + ADP. It carries out the reaction dTDP + GTP = dTTP + GDP. It catalyses the reaction dTDP + ATP = dTTP + ADP. In terms of biological role, broad-specificity mitochondrial nucleoside phosphate kinase involved in cellular nucleotide homeostasis by catalyzing nucleoside-phosphate interconversions. Similar to other adenylate kinases, preferentially catalyzes the phosphorylation of the nucleoside monophosphate AMP with ATP as phosphate donor to produce ADP. Phosphorylates only AMP when using GTP as phosphate donor. In vitro, can also catalyze the phosphorylation of CMP, dAMP and dCMP and use GTP as an alternate phosphate donor. Moreover, exhibits a diphosphate kinase activity, producing ATP, CTP, GTP, UTP, TTP, dATP, dCTP and dGTP from the corresponding diphosphate substrates with either ATP or GTP as phosphate donors. Plays a role in controlling cellular ATP levels by regulating phosphorylation and activation of the energy sensor protein kinase AMPK. Plays a protective role in the cellular response to oxidative stress. This is Adenylate kinase 4, mitochondrial from Rattus norvegicus (Rat).